A 127-amino-acid chain; its full sequence is Small ribosomal subunit protein uS11c (127 aa).

This sequence belongs to the universal ribosomal protein uS11 family. As to quaternary structure, part of the 30S ribosomal subunit.

The protein resides in the plastid. Its subcellular location is the chloroplast. This is Small ribosomal subunit protein uS11c from Heterosigma akashiwo (strain NIES-293 / 8280G21-1).